The primary structure comprises 235 residues: ATP phosphoribosyltransferase (235 aa).

The protein belongs to the ATP phosphoribosyltransferase family. Short subfamily. In terms of assembly, heteromultimer composed of HisG and HisZ subunits.

Its subcellular location is the cytoplasm. It carries out the reaction 1-(5-phospho-beta-D-ribosyl)-ATP + diphosphate = 5-phospho-alpha-D-ribose 1-diphosphate + ATP. Its pathway is amino-acid biosynthesis; L-histidine biosynthesis; L-histidine from 5-phospho-alpha-D-ribose 1-diphosphate: step 1/9. Functionally, catalyzes the condensation of ATP and 5-phosphoribose 1-diphosphate to form N'-(5'-phosphoribosyl)-ATP (PR-ATP). Has a crucial role in the pathway because the rate of histidine biosynthesis seems to be controlled primarily by regulation of HisG enzymatic activity. The protein is ATP phosphoribosyltransferase of Synechococcus sp. (strain JA-2-3B'a(2-13)) (Cyanobacteria bacterium Yellowstone B-Prime).